We begin with the raw amino-acid sequence, 503 residues long: Zinc-regulated transporter 3 (503 aa).

The next 3 membrane-spanning stretches (helical) occupy residues 8–28, 42–62, and 75–95; these read LLFSLISSVLCILGALCVPLL, LVNYGLSLSAGSMITTSLYML, and FPGLLLGICLSFFLNYLVHAF. Residues 112 to 171 form a disordered region; that stretch reads GSHIHSKSHSHSHSHSHADSHSNFSNDHDLENAPSEHGYATSSSSVSENDPLITKDSDRP. Residues 115–126 are compositionally biased toward basic residues; sequence IHSKSHSHSHSH. Residues 127–142 are compositionally biased toward basic and acidic residues; it reads SHADSHSNFSNDHDLE. 2 positions are modified to phosphoserine: S178 and S188. 2 disordered regions span residues 221–244 and 274–295; these read QSERNVPHGCEGSEDNGQSDDKDH and HHSSESPENYGSNQLSHSFSSP. Polar residues predominate over residues 280-295; that stretch reads PENYGSNQLSHSFSSP. 5 consecutive transmembrane segments (helical) span residues 336–356, 371–391, 398–418, 438–458, and 482–502; these read IGMQTCLVLALHKFPEGFIIF, IFLSLTIHNFVEGFAMTLPFY, WVAILITAVLGGGSQPLGALI, LLSVTAGFLLVIGLQMFQTGI, and GTTCLKWCCTGVLLILASALF.

The protein belongs to the ZIP transporter (TC 2.A.5) family.

The protein resides in the vacuole membrane. In terms of biological role, transports zinc from storage in the vacuole to the cytoplasm. The protein is Zinc-regulated transporter 3 (ZRT3) of Saccharomyces cerevisiae (strain ATCC 204508 / S288c) (Baker's yeast).